A 98-amino-acid chain; its full sequence is Large ribosomal subunit protein eL21 (98 aa).

Residues 1 to 24 (MVKMSHGPRSGSRRKLTKSAEERK) are disordered.

It belongs to the eukaryotic ribosomal protein eL21 family.

The polypeptide is Large ribosomal subunit protein eL21 (rpl21e) (Thermoplasma acidophilum (strain ATCC 25905 / DSM 1728 / JCM 9062 / NBRC 15155 / AMRC-C165)).